Consider the following 77-residue polypeptide: MAIEKGEAFARRDIYIDYDFEDVTYRWDHRQGTIHVRFYGEAESPEPVEHDNRLFNDALRFGREITREEYETGFPKG.

Functionally, immunity protein that plays a role in preventing early activation of toxin Tas1. This Pseudomonas aeruginosa (strain UCBPP-PA14) protein is Immune protein Tis1 (tis1).